The following is a 290-amino-acid chain: 33 kDa chaperonin (290 aa).

Cystine bridges form between cysteine 235-cysteine 237 and cysteine 268-cysteine 271.

The protein belongs to the HSP33 family. Post-translationally, under oxidizing conditions two disulfide bonds are formed involving the reactive cysteines. Under reducing conditions zinc is bound to the reactive cysteines and the protein is inactive.

It is found in the cytoplasm. Functionally, redox regulated molecular chaperone. Protects both thermally unfolding and oxidatively damaged proteins from irreversible aggregation. Plays an important role in the bacterial defense system toward oxidative stress. This chain is 33 kDa chaperonin, found in Streptococcus mutans serotype c (strain ATCC 700610 / UA159).